The following is a 698-amino-acid chain: Cytoplasmic polyadenylation element-binding protein 3 (698 aa).

The span at 1–11 (MQDDLLMDKSK) shows a compositional bias: basic and acidic residues. Disordered regions lie at residues 1–114 (MQDD…WSTG) and 158–208 (AQTQ…SAAA). Low complexity predominate over residues 13–28 (QPQPQQQQRQQQQPQP). Positions 29-44 (ESSVSEAPSTPLSSET) are enriched in polar residues. Pro residues predominate over residues 87–96 (PQQPPPPQEP). A compositionally biased stretch (polar residues) spans 103-114 (LSPSFGSTWSTG). The span at 165 to 185 (QPPPPAPAPQPAQPAQPPQAQ) shows a compositional bias: pro residues. The span at 186-208 (PPQQRRSPASPSQAPYAQRSAAA) shows a compositional bias: low complexity. Phosphoserine occurs at positions 192, 195, and 290. R308 carries the asymmetric dimethylarginine modification. 2 RRM domains span residues 441–532 (RKVF…PWNL) and 549–631 (KTIF…PYVL).

The protein belongs to the RRM CPEB family. In terms of assembly, following synaptic activity, forms amyloid-like oligomers. Aggregation requires an intact actin cytoskeleton. Interacts with STAT5B; this inhibits STAT5B-mediated transcriptional activation. Interacts with E3 ubiquitin-protein ligase NEURL1; this leads to monoubiquitination and activation of CPEB3. Interacts with CAPN2; this leads to cleavage of CPEB3. Interacts (via C-terminal RNA-binding region) with TOB1; TOB1 also binds CNOT7/CAF1 and recruits it to CPEB3 to form a ternary complex. Interacts with SUMO-conjugating enzyme UBC9. Interacts with IPO5; the interaction is enhanced in a RAN-regulated manner following neuronal stimulation and mediates CPEB3 nuclear import. Interacts with exportin XPO1/CRM1. In terms of processing, activated by NEURL1-mediated monoubiquitination, resulting in the growth of new dendritic spines and increased levels of GRIA1 and GRIA2. NEURL1-mediated monoubiquitination facilitates synaptic plasticity and hippocampal-dependent memory storage. Under basal unstimulated conditions when CPEB3 is mainly unaggregated, sumoylated and acts as a translational repressor. Following neuronal stimulation, becomes desumoylated and aggregated which is required for the translation of mRNA targets and for dendritic filopodia formation. Post-translationally, following neuronal stimulation, cleaved by CAPN2 which abolishes its translational repressor activity, leading to translation of CPEB3 target mRNAs. In terms of processing, phosphorylation is enhanced by neuronal stimulation.

The protein localises to the cytoplasm. It is found in the nucleus. The protein resides in the synapse. It localises to the cell projection. Its subcellular location is the dendrite. The protein localises to the postsynaptic density. Functionally, sequence-specific RNA-binding protein which acts as a translational repressor in the basal unstimulated state but, following neuronal stimulation, acts as a translational activator. In contrast to CPEB1, does not bind to the cytoplasmic polyadenylation element (CPE), a uridine-rich sequence element within the mRNA 3'-UTR, but binds to a U-rich loop within a stem-loop structure. Required for the consolidation and maintenance of hippocampal-based long term memory. In the basal state, binds to the mRNA 3'-UTR of the glutamate receptors GRIA2/GLUR2 mRNA and negatively regulates their translation. Also represses the translation of DLG4, GRIN1, GRIN2A and GRIN2B. When activated, acts as a translational activator of GRIA1 and GRIA2. In the basal state, suppresses SUMO2 translation but activates it following neuronal stimulation. Binds to the 3'-UTR of TRPV1 mRNA and represses TRPV1 translation which is required to maintain normal thermoception. Binds actin mRNA, leading to actin translational repression in the basal state and to translational activation following neuronal stimulation. Negatively regulates target mRNA levels by binding to TOB1 which recruits CNOT7/CAF1 to a ternary complex and this leads to target mRNA deadenylation and decay. In addition to its role in translation, binds to and inhibits the transcriptional activation activity of STAT5B without affecting its dimerization or DNA-binding activity. This, in turn, represses transcription of the STAT5B target gene EGFR which has been shown to play a role in enhancing learning and memory performance. In contrast to CPEB1, CPEB2 and CPEB4, not required for cell cycle progression. This Homo sapiens (Human) protein is Cytoplasmic polyadenylation element-binding protein 3 (CPEB3).